The sequence spans 493 residues: 3-octaprenyl-4-hydroxybenzoate carboxy-lyase (493 aa).

N172 serves as a coordination point for Mn(2+). Prenylated FMN is bound by residues 175–177 (IYR), 189–191 (RWL), and 194–195 (RG). E238 is a Mn(2+) binding site. D287 acts as the Proton donor in catalysis.

It belongs to the UbiD family. Homohexamer. Requires prenylated FMN as cofactor. Mn(2+) serves as cofactor.

Its subcellular location is the cell membrane. The enzyme catalyses a 4-hydroxy-3-(all-trans-polyprenyl)benzoate + H(+) = a 2-(all-trans-polyprenyl)phenol + CO2. The protein operates within cofactor biosynthesis; ubiquinone biosynthesis. In terms of biological role, catalyzes the decarboxylation of 3-octaprenyl-4-hydroxy benzoate to 2-octaprenylphenol, an intermediate step in ubiquinone biosynthesis. The chain is 3-octaprenyl-4-hydroxybenzoate carboxy-lyase from Shewanella pealeana (strain ATCC 700345 / ANG-SQ1).